We begin with the raw amino-acid sequence, 1088 residues long: MALHFQSLAELEVLCTHLYVGTDLTERIEAEKALLELIDSPECLSKCQLLLEQGTTSYAQLLAATCLSKLVTRINPLPIEQRIDIRNYILNYVASQPKLAPFVIQALIQVIAKLTKLGWFEVQKDEFVFREIIADVKKFLQGTVEHCIIGVIILCELTQEMNLVDYSRPSAKHRKIATSFRDTSLKDILVLACSLLKQVLAKPLNLQDQDQQSLVMQVLKLVLSCLNFDFLGSSADESADDLCTVQIPTTWRTIFLEPETLDLFFNLYHSLPPLLSQLALSCLVQFASTRRSLFSSPERAKYLGNLIKGVKRILENPQGLSDPGNYHEFCRFLARLKTNYQLGELVLVKEYAEVIGLIANFTITSLQHWEFAPNSVHYLLTLWQRMVASVPFVKSAEPHLLDTYAPEITKAFITSRLESVAIVVRDNLEDPLDDTATVFQQLEQLCTVSRCEYEKTCTLLVQLFDQNAQNYQKLLHAAPGLAVDMAIQEGRLAWLIYLVGTVVGGRLTYTSTDEHDAMDGELSCRVFQLISLMDTRLPHCTNEKIELAVLWFLDQFRKTYVGDQLQRTSKVYARMSEVLGITDDNHVLETFMTKIVTNLKYWGRCEPVISRTLQFLSDLSVGYILLKKLVKIDAVKFMLKNHTSEHFPFLGISETYNVGDFRCRTTFYTALTRLLMVDLGEDEDEFENFMLPLTVSFETVLQIFNNNFKQEEVKRMLIGLARDLRGIAFALNTKTSYTMLFDWIYPAYLPVLQRAIERWYGEPACTTPILKLLAELMQNRSQRLNFDVSSPNGILLFREASKMICTYGNQILSLGSLSKDKIYPMKLKGISICYSALKSALCGNYVSFGVFKLYGDNHFDNVLQAFVKMLLSVSHSDLLQYRKLSQSYYPLLECLTQDHMSFITNLEPPVLLYVLTSLSEGLTTLDTVVSSSCCTSLDYMVTYLFKHIAKEGKKPLRSREAMQAGQRLLHFMQQNPDVLQQMMSVLMNTIVFEDCRNQWSVSRPLLGLILLNEKYFSELRASLINSQPLPKQEVLGQCFRNLMEGVEQNLSVKNRDRFTQNLSVFRRDVAEALRSDGHTDLSSLDMMS.

Alanine 2 is modified (N-acetylalanine). Serine 569 is subject to Phosphoserine.

This sequence belongs to the exportin family. Binds to nucleoporins and the GTP-bound form of Ran. Highly expressed in primary spermatocytes and very weakly in pancreas.

The protein resides in the cytoplasm. It localises to the nucleus. The protein localises to the nuclear pore complex. In terms of biological role, may function as a nuclear transport receptor. The chain is Ran-binding protein 17 (Ranbp17) from Mus musculus (Mouse).